The primary structure comprises 137 residues: Drosulfakinins (137 aa).

An N-terminal signal peptide occupies residues 1 to 31; it reads MGLRSCTHFATLVIPLWALAFCFLVVVPVPA. Positions 32–74 are excised as a propeptide; sequence QTNLQTSKGDRRLQDLESNMGAESDQPNANLVRPSLSRFGDKR. The residue at position 81 (phenylalanine 81) is a Phenylalanine amide. Positions 85-107 are excised as a propeptide; the sequence is VPRPMIPIELDLLMDNDDENTKA. Tyrosine 113 carries the post-translational modification Sulfotyrosine. A Phenylalanine amide modification is found at phenylalanine 118. Sulfotyrosine is present on tyrosine 130. Phenylalanine 135 carries the phenylalanine amide modification.

Belongs to the gastrin/cholecystokinin family.

The protein resides in the secreted. Functionally, drosulfakinin-0 (DSK 0) plays diverse biological roles including regulating gut muscle contraction in adults but not in larvae. The chain is Drosulfakinins from Drosophila yakuba (Fruit fly).